The sequence spans 101 residues: Large ribosomal subunit protein bL21 (101 aa).

The protein belongs to the bacterial ribosomal protein bL21 family. Part of the 50S ribosomal subunit. Contacts protein L20.

In terms of biological role, this protein binds to 23S rRNA in the presence of protein L20. This chain is Large ribosomal subunit protein bL21, found in Micrococcus luteus (strain ATCC 4698 / DSM 20030 / JCM 1464 / CCM 169 / CCUG 5858 / IAM 1056 / NBRC 3333 / NCIMB 9278 / NCTC 2665 / VKM Ac-2230) (Micrococcus lysodeikticus).